The chain runs to 156 residues: Arginine repressor (156 aa).

It belongs to the ArgR family.

It is found in the cytoplasm. Its pathway is amino-acid biosynthesis; L-arginine biosynthesis [regulation]. Regulates arginine biosynthesis genes. The polypeptide is Arginine repressor (Photobacterium profundum (strain SS9)).